Consider the following 125-residue polypeptide: Ribonuclease P protein component (125 aa).

The protein belongs to the RnpA family. As to quaternary structure, consists of a catalytic RNA component (M1 or rnpB) and a protein subunit.

It catalyses the reaction Endonucleolytic cleavage of RNA, removing 5'-extranucleotides from tRNA precursor.. Functionally, RNaseP catalyzes the removal of the 5'-leader sequence from pre-tRNA to produce the mature 5'-terminus. It can also cleave other RNA substrates such as 4.5S RNA. The protein component plays an auxiliary but essential role in vivo by binding to the 5'-leader sequence and broadening the substrate specificity of the ribozyme. This Clostridium botulinum (strain Eklund 17B / Type B) protein is Ribonuclease P protein component.